A 193-amino-acid chain; its full sequence is Ion-translocating oxidoreductase complex subunit A (193 aa).

6 consecutive transmembrane segments (helical) span residues 5 to 25 (ALLF…FLGL), 39 to 59 (IGMG…SWLV), 62 to 82 (FILV…LVLA), 102 to 122 (LLGI…VVLL), 134 to 154 (TIYG…FAAI), and 171 to 191 (SIAL…TGLV).

It belongs to the NqrDE/RnfAE family. In terms of assembly, the complex is composed of six subunits: RnfA, RnfB, RnfC, RnfD, RnfE and RnfG.

The protein localises to the cell inner membrane. Functionally, part of a membrane-bound complex that couples electron transfer with translocation of ions across the membrane. This is Ion-translocating oxidoreductase complex subunit A from Pectobacterium carotovorum subsp. carotovorum (strain PC1).